The following is a 71-amino-acid chain: Exodeoxyribonuclease 7 small subunit (71 aa).

Belongs to the XseB family. Heterooligomer composed of large and small subunits.

The protein localises to the cytoplasm. The catalysed reaction is Exonucleolytic cleavage in either 5'- to 3'- or 3'- to 5'-direction to yield nucleoside 5'-phosphates.. Functionally, bidirectionally degrades single-stranded DNA into large acid-insoluble oligonucleotides, which are then degraded further into small acid-soluble oligonucleotides. This Streptococcus uberis (strain ATCC BAA-854 / 0140J) protein is Exodeoxyribonuclease 7 small subunit.